A 218-amino-acid polypeptide reads, in one-letter code: Probable transaldolase (218 aa).

Lys87 functions as the Schiff-base intermediate with substrate in the catalytic mechanism.

The protein belongs to the transaldolase family. Type 3B subfamily.

The protein resides in the cytoplasm. It carries out the reaction D-sedoheptulose 7-phosphate + D-glyceraldehyde 3-phosphate = D-erythrose 4-phosphate + beta-D-fructose 6-phosphate. Its pathway is carbohydrate degradation; pentose phosphate pathway; D-glyceraldehyde 3-phosphate and beta-D-fructose 6-phosphate from D-ribose 5-phosphate and D-xylulose 5-phosphate (non-oxidative stage): step 2/3. Its function is as follows. Transaldolase is important for the balance of metabolites in the pentose-phosphate pathway. In Bacteroides fragilis (strain ATCC 25285 / DSM 2151 / CCUG 4856 / JCM 11019 / LMG 10263 / NCTC 9343 / Onslow / VPI 2553 / EN-2), this protein is Probable transaldolase.